The primary structure comprises 540 residues: Probable pectinesterase/pectinesterase inhibitor 60 (540 aa).

Positions 1 to 31 (MNIMMVQNISFLSLHLLLILLLCLRPLTTVA) are cleaved as a signal peptide. The interval 32–185 (DGNSTNIDGW…SHLISNCLAV (154 aa)) is pectinesterase inhibitor 60. Asparagine 34, asparagine 91, asparagine 95, asparagine 120, asparagine 161, and asparagine 195 each carry an N-linked (GlcNAc...) asparagine glycan. Residues 225-526 (NLVVAKDGSG…FSVGKFIAGT (302 aa)) form a pectinesterase 60 region. Positions 302 and 332 each coordinate substrate. The Proton donor; for pectinesterase activity role is filled by aspartate 355. An intrachain disulfide couples cysteine 369 to cysteine 389. Aspartate 376 acts as the Nucleophile; for pectinesterase activity in catalysis. Substrate contacts are provided by arginine 444 and tryptophan 446.

The protein in the N-terminal section; belongs to the PMEI family. It in the C-terminal section; belongs to the pectinesterase family. In terms of tissue distribution, expressed in siliques.

The protein resides in the secreted. It localises to the cell wall. It catalyses the reaction [(1-&gt;4)-alpha-D-galacturonosyl methyl ester](n) + n H2O = [(1-&gt;4)-alpha-D-galacturonosyl](n) + n methanol + n H(+). It functions in the pathway glycan metabolism; pectin degradation; 2-dehydro-3-deoxy-D-gluconate from pectin: step 1/5. Functionally, acts in the modification of cell walls via demethylesterification of cell wall pectin. This Arabidopsis thaliana (Mouse-ear cress) protein is Probable pectinesterase/pectinesterase inhibitor 60 (PME60).